The following is a 72-amino-acid chain: Translation initiation factor IF-1 (72 aa).

An S1-like domain is found at 1–72 (MSKNDVIEVE…TRGRIVYRFK (72 aa)).

It belongs to the IF-1 family. As to quaternary structure, component of the 30S ribosomal translation pre-initiation complex which assembles on the 30S ribosome in the order IF-2 and IF-3, IF-1 and N-formylmethionyl-tRNA(fMet); mRNA recruitment can occur at any time during PIC assembly.

It is found in the cytoplasm. Functionally, one of the essential components for the initiation of protein synthesis. Stabilizes the binding of IF-2 and IF-3 on the 30S subunit to which N-formylmethionyl-tRNA(fMet) subsequently binds. Helps modulate mRNA selection, yielding the 30S pre-initiation complex (PIC). Upon addition of the 50S ribosomal subunit IF-1, IF-2 and IF-3 are released leaving the mature 70S translation initiation complex. The protein is Translation initiation factor IF-1 of Desulforamulus reducens (strain ATCC BAA-1160 / DSM 100696 / MI-1) (Desulfotomaculum reducens).